Consider the following 394-residue polypeptide: D-mannose isomerase (394 aa).

Active-site proton donor/acceptor residues include histidine 251 and histidine 380.

The protein belongs to the N-acylglucosamine 2-epimerase family. Monomer.

The enzyme catalyses D-mannose = D-fructose. The catalysed reaction is D-lyxose = D-xylulose. Its function is as follows. Catalyzes the reversible isomerization of D-mannose to D-fructose. Can also isomerize D-lyxose, with lower efficiency. In longer reaction with a higher concentration of enzyme, it can isomerize 4-OH D-mannose derivatives (D-talose and 4-O-monosaccharyl-D-mannose). Cannot use D-glucose. The protein is D-mannose isomerase of Marinomonas mediterranea (strain ATCC 700492 / JCM 21426 / NBRC 103028 / MMB-1).